A 294-amino-acid chain; its full sequence is MKFAKGHGTENDFVLLCDPPAELRLTGAGVAALCDRRRGLGADGVLRVTAAAAAAAAGVLDRLPDGVAGDDWYMDYRNADGSVAQMCGNGVRVFAHYLRASGLETRDEFVVGSLAGPRPVTVHAADATGADVSVDMGKANTLGGGGEAFEATVGGRRFAGLAVDVGNPHLACLDPELSVDELAALDVAAPVSFDAAQFPDGVNIEVLTAPAAGVVHMRVHERGVGETRSCGTGTVAAVVAALAAAGADTGTLTVRVPGGDVVVTVTDATSYLRGPSVLVAHGEISEEWWQQAQR.

Asn11 and Asn78 together coordinate substrate. Cys87 (proton donor) is an active-site residue. Substrate-binding positions include 88-89, Asn167, Asn203, and 221-222; these read GN and ER. Residue Cys230 is the Proton acceptor of the active site. Substrate is bound at residue 231 to 232; it reads GT.

This sequence belongs to the diaminopimelate epimerase family. In terms of assembly, homodimer.

It localises to the cytoplasm. It carries out the reaction (2S,6S)-2,6-diaminopimelate = meso-2,6-diaminopimelate. The protein operates within amino-acid biosynthesis; L-lysine biosynthesis via DAP pathway; DL-2,6-diaminopimelate from LL-2,6-diaminopimelate: step 1/1. Functionally, catalyzes the stereoinversion of LL-2,6-diaminopimelate (L,L-DAP) to meso-diaminopimelate (meso-DAP), a precursor of L-lysine and an essential component of the bacterial peptidoglycan. This chain is Diaminopimelate epimerase, found in Mycolicibacterium paratuberculosis (strain ATCC BAA-968 / K-10) (Mycobacterium paratuberculosis).